The primary structure comprises 304 residues: 6-dehydroglucose reductase (304 aa).

The NADP(+) site is built by tryptophan 28, arginine 29, and aspartate 56. Tyrosine 61 functions as the Proton donor in the catalytic mechanism. The D-glucose site is built by tyrosine 61, histidine 133, and arginine 134. Residues serine 163, asparagine 164, glutamine 185, serine 215, leucine 217, glycine 219, glycine 268, serine 269, glutamine 270, and arginine 274 each coordinate NADP(+).

It belongs to the aldo/keto reductase family.

The enzyme catalyses D-glucose + NADP(+) = 6-dehydro-D-glucose + NADPH + H(+). Functionally, part of the alkanesulfonate monooxygenase (sulfo-ASMO) pathway, a D-sulfoquinovose degradation pathway that enables the complete utilization of all carbons within sulfoquinovose (SQ) with concomitant production of inorganic sulfite. Catalyzes the NADP-dependent reduction of 6-dehydro-D-glucose to D-glucose. Can also catalyze the reversible reaction, the formation of 6-dehydro-D-glucose from D-glucose in the presence of NADP(+). This is 6-dehydroglucose reductase from Novosphingobium aromaticivorans (strain ATCC 700278 / DSM 12444 / CCUG 56034 / CIP 105152 / NBRC 16084 / F199).